A 569-amino-acid chain; its full sequence is MMRFTKFYAPSLKEAPKDASLPSHIFLTRAGFVEQIGSGLYNFLPLGKRVLDKIKNIVKEEMDKAGAQEVNLSFITPASLWQESGRYNVFGKELLRFKDRKKNEFVLGPTHEEAMLSLVKNKITSYKQLPLHLYQIGLKFRDEARPRFGLLRCREFLMKDGYSFHANEEDLGREFELMYKTYSQILQRMGLDFRAVEADSGAIGGSGSKEFMVLAKNGEDDILICENCDYAANVEAAKRAKKTCQDERPEANYASKFHTPNIKTIDSLAQFFKINAFYTIKAVVKKAIYENESKLVVFFIRGSDDLQEIKAQNACSALELVDASEEELEKAGLVAGFIGFVGLKDIDFYIDFELENEKQMIMGANEKDYHLIGIDVVNLNKDRFKDLIEVKEGDCCVKCGAKLKQSKGIEVGHIFKLGQKYSKAMNANFLDENGKSQPFYMGCYGIGVSRLLAVAIEANHDEKGCIWNKTLAPFVLEIIVSNLKDEKALEFANKLYEDLTNLGLEVLLDDRNERFGVKMNDFELMGFPYALVIGKGLENNEIELIQREDLVKELIKTDELMEILKKKVL.

It belongs to the class-II aminoacyl-tRNA synthetase family. ProS type 1 subfamily. Homodimer.

The protein localises to the cytoplasm. It carries out the reaction tRNA(Pro) + L-proline + ATP = L-prolyl-tRNA(Pro) + AMP + diphosphate. Its function is as follows. Catalyzes the attachment of proline to tRNA(Pro) in a two-step reaction: proline is first activated by ATP to form Pro-AMP and then transferred to the acceptor end of tRNA(Pro). As ProRS can inadvertently accommodate and process non-cognate amino acids such as alanine and cysteine, to avoid such errors it has two additional distinct editing activities against alanine. One activity is designated as 'pretransfer' editing and involves the tRNA(Pro)-independent hydrolysis of activated Ala-AMP. The other activity is designated 'posttransfer' editing and involves deacylation of mischarged Ala-tRNA(Pro). The misacylated Cys-tRNA(Pro) is not edited by ProRS. The sequence is that of Proline--tRNA ligase from Campylobacter jejuni subsp. jejuni serotype O:23/36 (strain 81-176).